Consider the following 183-residue polypeptide: Ribosome-recycling factor (183 aa).

It belongs to the RRF family.

The protein resides in the cytoplasm. In terms of biological role, responsible for the release of ribosomes from messenger RNA at the termination of protein biosynthesis. May increase the efficiency of translation by recycling ribosomes from one round of translation to another. This chain is Ribosome-recycling factor, found in Treponema pallidum (strain Nichols).